The chain runs to 403 residues: RUN domain-containing protein 3B (403 aa).

A disordered region spans residues Met-1–Leu-20. Arg-13 carries the omega-N-methylarginine modification. Positions Asp-53–Glu-185 constitute an RUN domain. The segment at Ser-207–Asn-232 is disordered. Residues Ser-211 and Ser-212 each carry the phosphoserine modification. Residues Phe-220–Glu-231 are compositionally biased toward polar residues. Residues Ala-296–Leu-321 adopt a coiled-coil conformation.

It belongs to the RUNDC3 family. Interacts with RAP2A.

This is RUN domain-containing protein 3B (Rundc3b) from Rattus norvegicus (Rat).